The chain runs to 519 residues: S-type anion channel SLAH2 (519 aa).

The tract at residues 1 to 31 (MNNPRSVSPLVSPANHSDLLENQRQSGSGDF) is disordered. The Cytoplasmic segment spans residues 1–140 (MNNPRSVSPL…LPEDKTWPFL (140 aa)). Over residues 20–29 (LENQRQSGSG) the composition is skewed to polar residues. A phosphoserine mark is found at serine 77 and serine 85. Residues 141–161 (LRFPITSYGMCLGVSSQAIMW) traverse the membrane as a helical segment. Residues 162–185 (KTLATTEAEKFLHVTQVINHVLWW) are Extracellular-facing. A helical transmembrane segment spans residues 186 to 206 (ISLLLLLAVSITYLFKTILFF). The Cytoplasmic segment spans residues 207 to 220 (EAVRREFRHPIRVN). A helical membrane pass occupies residues 221 to 241 (FFFAPLISILFLALGIPHSII). Residues 242–247 (SHLPST) lie on the Extracellular side of the membrane. A helical transmembrane segment spans residues 248–268 (LWYFLMAPILFLEMKIYGQWM). At 269–281 (SGGQRRLSKVANP) the chain is on the cytoplasmic side. A helical membrane pass occupies residues 282 to 302 (TNHLSIVGNFAGALLGASMGL). Over 303-304 (KE) the chain is Extracellular. The chain crosses the membrane as a helical span at residues 305 to 325 (GPIFFFAIGLAYYLVLFVTLY). The Cytoplasmic segment spans residues 326 to 340 (QRLPTNETLPKELHP). The chain crosses the membrane as a helical span at residues 341–361 (VFFLFVAAPAVASMAWTKISA). Serine 362 is a topological domain (extracellular). Residues 363–383 (FDLGSRLAYFISLFLYFSLVC) form a helical membrane-spanning segment. Residues 384–389 (RINLFR) are Cytoplasmic-facing. A helical transmembrane segment spans residues 390–410 (GFKFSLAWWAYTFPMTAVASA). Residues 411-424 (TIKYSDEVTGVATK) lie on the Extracellular side of the membrane. The chain crosses the membrane as a helical span at residues 425–445 (ILSVVMSGAATLTVIAVLGLT). Residues 446-519 (VMHAFVQRDL…VDSSTVQNSN (74 aa)) are Cytoplasmic-facing. The interval 495-519 (PEDNQIDLESPPLVNVDSSTVQNSN) is disordered. Polar residues predominate over residues 510–519 (VDSSTVQNSN).

The protein belongs to the SLAC1 S-type anion channel family. As to quaternary structure, homotrimer. In terms of tissue distribution, expressed in lateral root primordia and tap root tips.

It localises to the cell membrane. Its function is as follows. Slow, weak voltage-dependent S-type anion efflux channel involved in maintenance of anion homeostasis. This Arabidopsis thaliana (Mouse-ear cress) protein is S-type anion channel SLAH2 (SLAH2).